The sequence spans 351 residues: MTPEYFLRSLLMMILAVFSANASNWLYLAKLSSVGSISEEETCEKLKGPIQRQVQMCKRNLEVMDSVRRGAQLAIEECQYQFRNRRWNCSTLDTLPVFGKVVTQGTREAAFVYAISSAGVAFAVTRACSSGDLEKCGCDRTVHGVSPQGFQWSGCSDNILYGVAFSQSFVDVRERSKGGSSSRALMNLHNNEAGRKAILNNMRVECKCHGVSGSCEVKTCWKAMPTFRKVGNVLKEKFDGATEVEQKKIGSTKVLVPKNSQFKPHTDEDLVYLDSSPDFCDHDLKNGVLGTTGRQCNKTSKAIDGCELMCCGRGFHTEEVEIVERCSCKFHWCCFVKCKQCHKVVEMHTCR.

The signal sequence occupies residues 1–22 (MTPEYFLRSLLMMILAVFSANA). 11 disulfide bridges follow: Cys78–Cys89, Cys128–Cys136, Cys138–Cys155, Cys206–Cys220, Cys208–Cys215, Cys280–Cys311, Cys296–Cys306, Cys310–Cys350, Cys326–Cys341, Cys328–Cys338, and Cys333–Cys334. Asn88 is a glycosylation site (N-linked (GlcNAc...) asparagine). Ser212 is lipidated: O-palmitoleoyl serine; by PORCN. N-linked (GlcNAc...) asparagine glycosylation occurs at Asn297.

This sequence belongs to the Wnt family. Post-translationally, palmitoleoylation is required for efficient binding to frizzled receptors. Depalmitoleoylation leads to Wnt signaling pathway inhibition. As to expression, expressed in the brain and floor plate. In the developing pronephros, expressed in the proximal tubules and nephrostomes but absent from the pronephric duct.

The protein resides in the secreted. It localises to the extracellular space. It is found in the extracellular matrix. Its function is as follows. Ligand for members of the frizzled family of seven transmembrane receptors. Plays an important role in embryonic kidney development. Acts downstream of Notch signaling during pronephric kidney development. During early pronephros development, patterns the proximal pronephric anlagen to promote glomus and nephrostome formation. Also required later in pronephros development for tubulogenesis. The polypeptide is Protein Wnt-4 (wnt4) (Xenopus laevis (African clawed frog)).